We begin with the raw amino-acid sequence, 96 residues long: Co-chaperonin GroES (96 aa).

This sequence belongs to the GroES chaperonin family. Heptamer of 7 subunits arranged in a ring. Interacts with the chaperonin GroEL.

It localises to the cytoplasm. Functionally, together with the chaperonin GroEL, plays an essential role in assisting protein folding. The GroEL-GroES system forms a nano-cage that allows encapsulation of the non-native substrate proteins and provides a physical environment optimized to promote and accelerate protein folding. GroES binds to the apical surface of the GroEL ring, thereby capping the opening of the GroEL channel. The polypeptide is Co-chaperonin GroES (Shewanella piezotolerans (strain WP3 / JCM 13877)).